The chain runs to 520 residues: Type I restriction enzyme EcoR124I/EcoR124II methylase subunit (520 aa).

Positions 10–190 are N-terminal domain; it reads AELHRQIWQI…YEFLISNYAA (181 aa). S-adenosyl-L-methionine-binding positions include 198 to 203, 230 to 232, and Glu-254; these read EFFTPQ and SGS. The segment at 198–473 is catalytic domain; sequence EFFTPQHVSK…NDYNLSVSSY (276 aa). A C-terminal tail region spans residues 481–510; that stretch reads EIIDIAELNAELKTTVSKIDQLRKDIDAIV.

This sequence belongs to the N(4)/N(6)-methyltransferase family. The type I restriction/modification system is composed of three polypeptides R, M and S; the restriction enzyme has stoichiometry R(2)M(2)S(1) while the methyltransferase is M(2)S(1). There is an equilibrium between R(2)M(2)S(1) and R(1)M(2)S(1); the latter is methylation and translocation proficient but restriction deficient. As to quaternary structure, (Microbial infection) Holoenenzyme interacts with Escherichia phage T7 protein Ocr; this interaction leads to the inhibition of the restriction activity, but may still allow methylation and translocation.

It catalyses the reaction a 2'-deoxyadenosine in DNA + S-adenosyl-L-methionine = an N(6)-methyl-2'-deoxyadenosine in DNA + S-adenosyl-L-homocysteine + H(+). The subtype gamma methyltransferase (M) subunit of a type I restriction enzyme. The M and S subunits together form a methyltransferase (MTase) that methylates A-3 on the top and bottom strand of the sequence 5'-GAAN(6)RTCG-3' (for EcoR124I) and 5'-GAAN(7)RTCG-3' (for EcoR124II). In the presence of the R subunit the complex can also act as an endonuclease, binding to the same target sequence but cutting the DNA some distance from this site. Whether the DNA is cut or modified depends on the methylation state of the target sequence. When the target site is unmodified, the DNA is cut. When the target site is hemimethylated, the complex acts as a maintenance MTase modifying the DNA so that both strands become methylated. After locating a non-methylated recognition site, the enzyme complex serves as a molecular motor that translocates DNA in an ATP-dependent manner until a collision occurs that triggers cleavage. The R(1)M(2)S(1) complex translocates an average of 555 bp/second on nicked DNA; the R(2)M(2)S(1) complex translocates at double that speed. The 2 R subunit motors are independent and track along the helical pitch of the DNA, inducing positive supercoiling ahead of themselves. The polypeptide is Type I restriction enzyme EcoR124I/EcoR124II methylase subunit (hsdM) (Escherichia coli).